A 534-amino-acid chain; its full sequence is CTP synthase (534 aa).

Residues 1–267 form an amidoligase domain region; that stretch reads MTKYIFVTGG…DQIVCDHLKL (267 aa). Serine 13 contacts CTP. Residue serine 13 coordinates UTP. 14 to 19 lines the ATP pocket; that stretch reads SIGKGI. Residue tyrosine 54 coordinates L-glutamine. Residue aspartate 71 coordinates ATP. The Mg(2+) site is built by aspartate 71 and glutamate 141. Residues 148–150, 188–193, and lysine 224 each bind CTP; these read DIE and KTKPTQ. UTP is bound by residues 188–193 and lysine 224; that span reads KTKPTQ. 240–242 is a binding site for ATP; that stretch reads RDV. Residues 292 to 534 enclose the Glutamine amidotransferase type-1 domain; that stretch reads KIALVGKYVE…FVTAAIKNSN (243 aa). Glycine 354 is a binding site for L-glutamine. Cysteine 381 (nucleophile; for glutamine hydrolysis) is an active-site residue. L-glutamine-binding positions include 382–385, glutamate 405, and arginine 463; that span reads LGMQ. Active-site residues include histidine 508 and glutamate 510.

Belongs to the CTP synthase family. Homotetramer.

The catalysed reaction is UTP + L-glutamine + ATP + H2O = CTP + L-glutamate + ADP + phosphate + 2 H(+). The enzyme catalyses L-glutamine + H2O = L-glutamate + NH4(+). It catalyses the reaction UTP + NH4(+) + ATP = CTP + ADP + phosphate + 2 H(+). The protein operates within pyrimidine metabolism; CTP biosynthesis via de novo pathway; CTP from UDP: step 2/2. With respect to regulation, allosterically activated by GTP, when glutamine is the substrate; GTP has no effect on the reaction when ammonia is the substrate. The allosteric effector GTP functions by stabilizing the protein conformation that binds the tetrahedral intermediate(s) formed during glutamine hydrolysis. Inhibited by the product CTP, via allosteric rather than competitive inhibition. Its function is as follows. Catalyzes the ATP-dependent amination of UTP to CTP with either L-glutamine or ammonia as the source of nitrogen. Regulates intracellular CTP levels through interactions with the four ribonucleotide triphosphates. This Streptococcus pyogenes serotype M2 (strain MGAS10270) protein is CTP synthase.